A 194-amino-acid chain; its full sequence is 7-methyl-GTP pyrophosphatase (194 aa).

Asp70 (proton acceptor) is an active-site residue.

This sequence belongs to the Maf family. YceF subfamily. Requires a divalent metal cation as cofactor.

Its subcellular location is the cytoplasm. It carries out the reaction N(7)-methyl-GTP + H2O = N(7)-methyl-GMP + diphosphate + H(+). Nucleoside triphosphate pyrophosphatase that hydrolyzes 7-methyl-GTP (m(7)GTP). May have a dual role in cell division arrest and in preventing the incorporation of modified nucleotides into cellular nucleic acids. The polypeptide is 7-methyl-GTP pyrophosphatase (Vibrio vulnificus (strain YJ016)).